Here is a 632-residue protein sequence, read N- to C-terminus: 2-oxoacid:ferredoxin oxidoreductase subunit alpha (632 aa).

A YPITP motif motif is present at residues 253–257 (YPITP). Substrate contacts are provided by T256 and R344.

Heterodimer composed of an alpha and a beta subunit.

The protein localises to the cytoplasm. The enzyme catalyses a 2-oxocarboxylate + 2 oxidized [2Fe-2S]-[ferredoxin] + CoA = an acyl-CoA + 2 reduced [2Fe-2S]-[ferredoxin] + CO2 + H(+). In terms of biological role, catalyzes the coenzyme A-dependent oxidative decarboxylation of different 2-oxoacids such as 2-oxoglutarate, pyruvate and 2-oxobutyrate to form their CoA derivatives. The chain is 2-oxoacid:ferredoxin oxidoreductase subunit alpha from Sulfolobus sp.